A 260-amino-acid chain; its full sequence is tRNA pseudouridine synthase C (260 aa).

Asp-54 is a catalytic residue.

It belongs to the pseudouridine synthase RluA family.

The enzyme catalyses uridine(65) in tRNA = pseudouridine(65) in tRNA. Functionally, responsible for synthesis of pseudouridine from uracil-65 in transfer RNAs. The polypeptide is tRNA pseudouridine synthase C (truC) (Escherichia coli (strain K12)).